A 214-amino-acid polypeptide reads, in one-letter code: Adenylate kinase (214 aa).

10–15 provides a ligand contact to ATP; sequence GGGKGT. An NMP region spans residues 30 to 59; that stretch reads STGDMFRENVKGGTELGLKAKEYMDAGQLV. AMP-binding positions include threonine 31, arginine 36, 57–59, 85–88, and glutamine 92; these read QLV and GFPR. The segment at 126–163 is LID; that stretch reads GRRVCRVCGATFHVLFNAPKEDGKCDKCGGELYQRSDD. Arginine 127 contacts ATP. Positions 130 and 133 each coordinate Zn(2+). An ATP-binding site is contributed by 136–137; sequence TF. The Zn(2+) site is built by cysteine 150 and cysteine 153. Residues arginine 160 and arginine 171 each contribute to the AMP site. Residue glutamine 199 participates in ATP binding.

Belongs to the adenylate kinase family. In terms of assembly, monomer.

It is found in the cytoplasm. The catalysed reaction is AMP + ATP = 2 ADP. The protein operates within purine metabolism; AMP biosynthesis via salvage pathway; AMP from ADP: step 1/1. In terms of biological role, catalyzes the reversible transfer of the terminal phosphate group between ATP and AMP. Plays an important role in cellular energy homeostasis and in adenine nucleotide metabolism. This is Adenylate kinase from Desulforudis audaxviator (strain MP104C).